The primary structure comprises 944 residues: 2-oxoglutarate dehydrogenase E1 component (944 aa).

The tract at residues 914-944 (RRRRSSPAEGDPTVHKKEQERIVSDSLTRKN) is disordered. Over residues 925–936 (PTVHKKEQERIV) the composition is skewed to basic and acidic residues.

This sequence belongs to the alpha-ketoglutarate dehydrogenase family. As to quaternary structure, homodimer. Part of the 2-oxoglutarate dehydrogenase (OGDH) complex composed of E1 (2-oxoglutarate dehydrogenase), E2 (dihydrolipoamide succinyltransferase) and E3 (dihydrolipoamide dehydrogenase); the complex contains multiple copies of the three enzymatic components (E1, E2 and E3). Thiamine diphosphate is required as a cofactor.

It carries out the reaction N(6)-[(R)-lipoyl]-L-lysyl-[protein] + 2-oxoglutarate + H(+) = N(6)-[(R)-S(8)-succinyldihydrolipoyl]-L-lysyl-[protein] + CO2. In terms of biological role, E1 component of the 2-oxoglutarate dehydrogenase (OGDH) complex which catalyzes the decarboxylation of 2-oxoglutarate, the first step in the conversion of 2-oxoglutarate to succinyl-CoA and CO(2). The sequence is that of 2-oxoglutarate dehydrogenase E1 component from Bacillus licheniformis (strain ATCC 14580 / DSM 13 / JCM 2505 / CCUG 7422 / NBRC 12200 / NCIMB 9375 / NCTC 10341 / NRRL NRS-1264 / Gibson 46).